The chain runs to 466 residues: Soluble pyridine nucleotide transhydrogenase (466 aa).

36–45 (EKESSVGGGC) is a binding site for FAD.

This sequence belongs to the class-I pyridine nucleotide-disulfide oxidoreductase family. It depends on FAD as a cofactor.

The protein resides in the cytoplasm. The enzyme catalyses NAD(+) + NADPH = NADH + NADP(+). Conversion of NADPH, generated by peripheral catabolic pathways, to NADH, which can enter the respiratory chain for energy generation. This Vibrio parahaemolyticus serotype O3:K6 (strain RIMD 2210633) protein is Soluble pyridine nucleotide transhydrogenase.